A 747-amino-acid polypeptide reads, in one-letter code: MTSQYSNYSCPLNNIQVNVIGSSRTSDDHFLEQMLTKRKKTNISQDLHYLLLGLNPRELYQISFKLARIDEKKYKFNGNFNEGDYYPHKNSEIPMEDTEEIVHSDGYQTGARWMKTGVYFPKIGISKEQPDKERCLLLESLHAYFPVLVFTTSSGISLEVPVWSQKFVTTMTSSNRSVKRREKRKLEETAGPAAKKTPDIIETTPEDVVPEVYNAQYFYQMQNNTVISSESKFSSPLALQQDLTEDFGTFAQLDAHFNVSVQSCSSSSLSSPAALKHDSTVSSDSDFDDKNSEEFDAVFEYIDQQFSNHDQNPMDQQSKSIDLNQTTWAPQSINNPGYLSTASSPAALNQDSSASEKSSIVRDKKSDENCLDEFDRVFNELDQQFTPKEDQVQDLSNCTTWNQEPINNSIQSNQFINPELFYFIFHKCLIISWPSCLSCCRGSILPQHLRTPPLVPISQLLIISPLVLPPYHNFTTGSATVSPFASTPANMTIFNFTSDSSTTYSNSTTAQVFPDVANTPDLSYFNIAPAVDLSLFIDPFVQSGRDLSIERSIRNFTNTLKKAHRQKKTAILTFQSTEPMQLEFKYCTKMLLRTDKPVGNFSIQLSGPYLEHLLNLSHHLCRFSEYNLFVKAHFPRGSYGSLTSMTGPAVEIPETQENITIIWVKKDFPENVNKYPVAINSLITEAIASNGTNQVLLTSKYPSDCTIRFRKCGFMIEGVLVVKKKETVIIDRQILGELNRLKHDLLQ.

Residues 33–199 (QMLTKRKKTN…AGPAAKKTPD (167 aa)) constitute a DNA-binding region (T-box). Disordered regions lie at residues 268-289 (SLSS…DFDD) and 332-364 (SINN…VRDK). Over residues 332 to 358 (SINNPGYLSTASSPAALNQDSSASEKS) the composition is skewed to polar residues.

Its subcellular location is the nucleus. In Caenorhabditis elegans, this protein is Putative T-box protein 31 (tbx-31).